The sequence spans 89 residues: UPF0367 protein CYB_2632 (89 aa).

Residues 69-89 (SKSGSASPMGTRPGFLAQLQS) form a disordered region.

It belongs to the UPF0367 family.

The sequence is that of UPF0367 protein CYB_2632 from Synechococcus sp. (strain JA-2-3B'a(2-13)) (Cyanobacteria bacterium Yellowstone B-Prime).